A 239-amino-acid chain; its full sequence is uncharacterized protein (239 aa).

Residues 1–23 (MKTMVAMLLAAVGVAVSASSTLA) form the signal peptide. Basic and acidic residues predominate over residues 220–230 (AHPKQTLRDQR). The tract at residues 220 to 239 (AHPKQTLRDQRPAGGDEITK) is disordered.

This is an uncharacterized protein from Sinorhizobium fredii (strain NBRC 101917 / NGR234).